The sequence spans 137 residues: Flagellar basal body rod protein FlgB (137 aa).

Belongs to the flagella basal body rod proteins family. In terms of assembly, the basal body constitutes a major portion of the flagellar organelle and consists of a number of rings mounted on a central rod. In Gram-negative bacteria, at least four rings, L, P, S and M are present, whereas Gram-positive bacteria lack the L and P rings. The rod consists of about 26 subunits of FlgG in the distal portion, and FlgB, FlgC and FlgF build up the proximal portion of the rod with about 6 subunits each. Rod assembly occurs by export via the flagellum-specific pathway of its constituent proteins and by their incorporation into the rod structure in the probable order of FlgB, FlgC, FlgF and FlgG. Another protein, FliE, also assembles onto the stable rod structure.

It localises to the bacterial flagellum basal body. In terms of biological role, structural component of flagellum, the bacterial motility apparatus. Part of the rod structure of flagellar basal body. This is Flagellar basal body rod protein FlgB from Yersinia ruckeri.